The primary structure comprises 199 residues: Dephospho-CoA kinase (199 aa).

The DPCK domain maps to 3–199; sequence VLGLTGSIGM…AAAKMPRRRD (197 aa). 11–16 contacts ATP; it reads GMGKST.

This sequence belongs to the CoaE family.

It is found in the cytoplasm. It carries out the reaction 3'-dephospho-CoA + ATP = ADP + CoA + H(+). Its pathway is cofactor biosynthesis; coenzyme A biosynthesis; CoA from (R)-pantothenate: step 5/5. Functionally, catalyzes the phosphorylation of the 3'-hydroxyl group of dephosphocoenzyme A to form coenzyme A. The sequence is that of Dephospho-CoA kinase from Rhodopseudomonas palustris (strain ATCC BAA-98 / CGA009).